We begin with the raw amino-acid sequence, 1453 residues long: Spike glycoprotein (1453 aa).

Residues 1 to 31 (MIVLTLCLFLVLYNSVICTSNNECVQVNVTQ) form the signal peptide. The segment at 32–780 (LPGNENIIRD…WTTTPNFYYY (749 aa)) is S1. Topologically, residues 32 to 1394 (LPGNENIIRD…NRIETYVKWP (1363 aa)) are virion surface. The interaction with host ANPEP stretch occupies residues 661-805 (VIYEEGDNIV…DSNDVDCEPI (145 aa)). Positions 781-1453 (SIYNYTNERV…YEPIEKVHVH (673 aa)) are S2. A fusion peptide region spans residues 1026–1047 (AGGITLGALGGGAVSIPFAVAV). The tract at residues 1041 to 1160 (IPFAVAVQAR…QVDRLITGRL (120 aa)) is heptad repeat 1 (HR1). 2 coiled-coil regions span residues 1108–1152 (QDVV…DAQV) and 1342–1384 (TYLN…LEWL). Positions 1309-1406 (PDYIDINQTV…VWLLIGLVVI (98 aa)) are heptad repeat 2 (HR2). Residues 1395-1414 (WYVWLLIGLVVIFCIPLLLF) form a helical membrane-spanning segment. At 1415–1453 (CCCSTGCCGCFGCIGSCCHSMCSRRQFESYEPIEKVHVH) the chain is on the intravirion side. Positions 1449–1453 (KVHVH) match the KxHxx motif.

The protein belongs to the alphacoronaviruses spike protein family. As to quaternary structure, homotrimer. During virus morphogenesis, found in a complex with M and HE proteins. Interacts with host ANPEP.

The protein resides in the virion membrane. It is found in the host endoplasmic reticulum-Golgi intermediate compartment membrane. In terms of biological role, S1 region attaches the virion to the cell membrane by interacting with host ANPEP/aminopeptidase N, initiating the infection. Binding to the receptor probably induces conformational changes in the S glycoprotein unmasking the fusion peptide of S2 region and activating membranes fusion. S2 region belongs to the class I viral fusion protein. Under the current model, the protein has at least 3 conformational states: pre-fusion native state, pre-hairpin intermediate state, and post-fusion hairpin state. During viral and target cell membrane fusion, the coiled coil regions (heptad repeats) regions assume a trimer-of-hairpins structure, positioning the fusion peptide in close proximity to the C-terminal region of the ectodomain. The formation of this structure appears to drive apposition and subsequent fusion of viral and target cell membranes. This Canis lupus familiaris (Dog) protein is Spike glycoprotein.